A 282-amino-acid chain; its full sequence is Bifunctional protein FolD (282 aa).

NADP(+)-binding positions include 165-167 (NRS), serine 190, and isoleucine 231.

The protein belongs to the tetrahydrofolate dehydrogenase/cyclohydrolase family. Homodimer.

It catalyses the reaction (6R)-5,10-methylene-5,6,7,8-tetrahydrofolate + NADP(+) = (6R)-5,10-methenyltetrahydrofolate + NADPH. It carries out the reaction (6R)-5,10-methenyltetrahydrofolate + H2O = (6R)-10-formyltetrahydrofolate + H(+). The protein operates within one-carbon metabolism; tetrahydrofolate interconversion. In terms of biological role, catalyzes the oxidation of 5,10-methylenetetrahydrofolate to 5,10-methenyltetrahydrofolate and then the hydrolysis of 5,10-methenyltetrahydrofolate to 10-formyltetrahydrofolate. This Clostridium botulinum (strain Langeland / NCTC 10281 / Type F) protein is Bifunctional protein FolD.